Consider the following 1478-residue polypeptide: Bud site selection protein 3 homolog (1478 aa).

3 disordered regions span residues 732–889, 1085–1106, and 1146–1168; these read KSKC…PSKG, QRDSNLSGDNDADTPLPMHSSN, and YSHSHDEEIDSEKRANTKPVSAP. Over residues 749–761 the composition is skewed to polar residues; it reads LVSTNDNSRTLSP. Residues 763–777 are compositionally biased toward low complexity; sequence TIISRTPRTISTITP. Positions 786–800 are enriched in polar residues; that stretch reads GQASNSPARGSISTT. A compositionally biased stretch (basic and acidic residues) spans 1146–1160; the sequence is YSHSHDEEIDSEKRA.

The protein belongs to the BUD3 family.

The protein resides in the cell tip. It localises to the cell septum. In terms of biological role, required for proper septum positioning and septum construction during septation. Acts as a landmark to mark sites for future septation, and as part of a scaffold that recruits components of the contractile ring to the site of septation. Not required to determine the site of lateral branch formation. The chain is Bud site selection protein 3 homolog (BUD3) from Eremothecium gossypii (strain ATCC 10895 / CBS 109.51 / FGSC 9923 / NRRL Y-1056) (Yeast).